Here is a 147-residue protein sequence, read N- to C-terminus: Mucoricin (147 aa).

The Ricin B-type lectin domain maps to Glu-4–Val-143.

This sequence belongs to the ribosome-inactivating protein family. Type 1 RIP subfamily.

The protein resides in the secreted. It catalyses the reaction Endohydrolysis of the N-glycosidic bond at one specific adenosine on the 28S rRNA.. Its function is as follows. N-glycosylase that inhibits protein synthesis in the host by depurinating ribosomal rRNA, and thus acts as a ribosomal inactivating protein (RIP). Promotes vascular permeability in the host and induces necrosis and apoptosis of host alveolar epithelial cells. The chain is Mucoricin from Rhizopus delemar (strain RA 99-880 / ATCC MYA-4621 / FGSC 9543 / NRRL 43880) (Mucormycosis agent).